The following is a 217-amino-acid chain: Thiamine-phosphate synthase (217 aa).

Residues 38 to 42 and Asn70 contribute to the 4-amino-2-methyl-5-(diphosphooxymethyl)pyrimidine site; that span reads QYRDK. Positions 71 and 90 each coordinate Mg(2+). A 4-amino-2-methyl-5-(diphosphooxymethyl)pyrimidine-binding site is contributed by Ser109. Residue 136-138 participates in 2-[(2R,5Z)-2-carboxy-4-methylthiazol-5(2H)-ylidene]ethyl phosphate binding; sequence SIT. Lys139 is a 4-amino-2-methyl-5-(diphosphooxymethyl)pyrimidine binding site. 2-[(2R,5Z)-2-carboxy-4-methylthiazol-5(2H)-ylidene]ethyl phosphate is bound at residue Gly166.

Belongs to the thiamine-phosphate synthase family. It depends on Mg(2+) as a cofactor.

It carries out the reaction 2-[(2R,5Z)-2-carboxy-4-methylthiazol-5(2H)-ylidene]ethyl phosphate + 4-amino-2-methyl-5-(diphosphooxymethyl)pyrimidine + 2 H(+) = thiamine phosphate + CO2 + diphosphate. The catalysed reaction is 2-(2-carboxy-4-methylthiazol-5-yl)ethyl phosphate + 4-amino-2-methyl-5-(diphosphooxymethyl)pyrimidine + 2 H(+) = thiamine phosphate + CO2 + diphosphate. It catalyses the reaction 4-methyl-5-(2-phosphooxyethyl)-thiazole + 4-amino-2-methyl-5-(diphosphooxymethyl)pyrimidine + H(+) = thiamine phosphate + diphosphate. Its pathway is cofactor biosynthesis; thiamine diphosphate biosynthesis; thiamine phosphate from 4-amino-2-methyl-5-diphosphomethylpyrimidine and 4-methyl-5-(2-phosphoethyl)-thiazole: step 1/1. Functionally, condenses 4-methyl-5-(beta-hydroxyethyl)thiazole monophosphate (THZ-P) and 2-methyl-4-amino-5-hydroxymethyl pyrimidine pyrophosphate (HMP-PP) to form thiamine monophosphate (TMP). This Nitrosococcus oceani (strain ATCC 19707 / BCRC 17464 / JCM 30415 / NCIMB 11848 / C-107) protein is Thiamine-phosphate synthase.